A 296-amino-acid polypeptide reads, in one-letter code: Formamidopyrimidine-DNA glycosylase (296 aa).

Pro-2 (schiff-base intermediate with DNA) is an active-site residue. Residue Glu-3 is the Proton donor of the active site. The active-site Proton donor; for beta-elimination activity is the Lys-61. Residues His-104, Arg-123, and Lys-169 each contribute to the DNA site. The FPG-type zinc finger occupies 255-289; the sequence is DAYGREGEPCRRCGAIMRRDKFMNRSSFYCPRCQP. Arg-279 (proton donor; for delta-elimination activity) is an active-site residue.

Belongs to the FPG family. In terms of assembly, monomer. The cofactor is Zn(2+).

It carries out the reaction Hydrolysis of DNA containing ring-opened 7-methylguanine residues, releasing 2,6-diamino-4-hydroxy-5-(N-methyl)formamidopyrimidine.. It catalyses the reaction 2'-deoxyribonucleotide-(2'-deoxyribose 5'-phosphate)-2'-deoxyribonucleotide-DNA = a 3'-end 2'-deoxyribonucleotide-(2,3-dehydro-2,3-deoxyribose 5'-phosphate)-DNA + a 5'-end 5'-phospho-2'-deoxyribonucleoside-DNA + H(+). Its function is as follows. Involved in base excision repair of DNA damaged by oxidation or by mutagenic agents. Acts as a DNA glycosylase that recognizes and removes damaged bases. Has a preference for oxidized purines, such as 7,8-dihydro-8-oxoguanine (8-oxoG). Has AP (apurinic/apyrimidinic) lyase activity and introduces nicks in the DNA strand. Cleaves the DNA backbone by beta-delta elimination to generate a single-strand break at the site of the removed base with both 3'- and 5'-phosphates. This chain is Formamidopyrimidine-DNA glycosylase, found in Mycobacterium sp. (strain KMS).